A 499-amino-acid chain; its full sequence is Calcium/calmodulin-dependent protein kinase type II subunit delta (499 aa).

An N-acetylalanine modification is found at alanine 2. A Protein kinase domain is found at 14-272 (YQLFEELGKG…ASEALKHPWI (259 aa)). Residues 20 to 28 (LGKGAFSVV) and lysine 43 contribute to the ATP site. The Proton acceptor role is filled by aspartate 136. The tract at residues 283-292 (HRQETVDCLK) is autoinhibitory domain. At threonine 287 the chain carries Phosphothreonine; by autocatalysis. Positions 291–301 (LKKFNARRKLK) are calmodulin-binding. Threonine 306 and threonine 307 each carry phosphothreonine; by autocatalysis. A Phosphoserine modification is found at serine 315. The residue at position 318 (lysine 318) is an N6-acetyllysine. A phosphoserine mark is found at serine 319 and serine 330. Threonine 331 bears the Phosphothreonine mark. Serine 333 bears the Phosphoserine mark. Phosphothreonine is present on residues threonine 336 and threonine 337. Phosphoserine occurs at positions 404, 490, and 494.

The protein belongs to the protein kinase superfamily. CAMK Ser/Thr protein kinase family. CaMK subfamily. In terms of assembly, CAMK2 is composed of 4 different chains: alpha (CAMK2A), beta (CAMK2B), gamma (CAMK2G), and delta (CAMK2D). The different isoforms assemble into homo- or heteromultimeric holoenzymes composed of 12 subunits with two hexameric rings stacked one on top of the other. Interacts with RRAD and CACNB2. In terms of processing, autophosphorylation of Thr-287 following activation by Ca(2+)/calmodulin. Phosphorylation of Thr-287 locks the kinase into an activated state. As to expression, expressed in cardiac muscle and skeletal muscle. Isoform Delta 3, isoform Delta 2, isoform Delta 8 and isoform Delta 9 are expressed in cardiac muscle. Isoform Delta 11 is expressed in skeletal muscle.

It localises to the cell membrane. The protein localises to the sarcolemma. It is found in the sarcoplasmic reticulum membrane. It catalyses the reaction L-seryl-[protein] + ATP = O-phospho-L-seryl-[protein] + ADP + H(+). The enzyme catalyses L-threonyl-[protein] + ATP = O-phospho-L-threonyl-[protein] + ADP + H(+). Activated by Ca(2+)/calmodulin. Binding of calmodulin results in conformational change that relieves intrasteric autoinhibition and allows autophosphorylation of Thr-287 which turns the kinase in a constitutively active form and confers to the kinase a Ca(2+)-independent activity. In terms of biological role, calcium/calmodulin-dependent protein kinase involved in the regulation of Ca(2+) homeostatis and excitation-contraction coupling (ECC) in heart by targeting ion channels, transporters and accessory proteins involved in Ca(2+) influx into the myocyte, Ca(2+) release from the sarcoplasmic reticulum (SR), SR Ca(2+) uptake and Na(+) and K(+) channel transport. Targets also transcription factors and signaling molecules to regulate heart function. In its activated form, is involved in the pathogenesis of dilated cardiomyopathy and heart failure. Contributes to cardiac decompensation and heart failure by regulating SR Ca(2+) release via direct phosphorylation of RYR2 Ca(2+) channel on 'Ser-2808'. In the nucleus, phosphorylates the MEF2 repressor HDAC4, promoting its nuclear export and binding to 14-3-3 protein, and expression of MEF2 and genes involved in the hypertrophic program. Is essential for left ventricular remodeling responses to myocardial infarction. In pathological myocardial remodeling acts downstream of the beta adrenergic receptor signaling cascade to regulate key proteins involved in ECC. Regulates Ca(2+) influx to myocytes by binding and phosphorylating the L-type Ca(2+) channel subunit beta-2 CACNB2. In addition to Ca(2+) channels, can target and regulate the cardiac sarcolemmal Na(+) channel Nav1.5/SCN5A and the K+ channel Kv4.3/KCND3, which contribute to arrhythmogenesis in heart failure. Phosphorylates phospholamban (PLN/PLB), an endogenous inhibitor of SERCA2A/ATP2A2, contributing to the enhancement of SR Ca(2+) uptake that may be important in frequency-dependent acceleration of relaxation (FDAR) and maintenance of contractile function during acidosis. May participate in the modulation of skeletal muscle function in response to exercise, by regulating SR Ca(2+) transport through phosphorylation of PLN/PLB and triadin, a ryanodine receptor-coupling factor. In response to interferon-gamma (IFN-gamma) stimulation, catalyzes phosphorylation of STAT1, stimulating the JAK-STAT signaling pathway. This is Calcium/calmodulin-dependent protein kinase type II subunit delta (CAMK2D) from Homo sapiens (Human).